Consider the following 143-residue polypeptide: Large ribosomal subunit protein uL11 (143 aa).

Belongs to the universal ribosomal protein uL11 family. As to quaternary structure, part of the ribosomal stalk of the 50S ribosomal subunit. Interacts with L10 and the large rRNA to form the base of the stalk. L10 forms an elongated spine to which L12 dimers bind in a sequential fashion forming a multimeric L10(L12)X complex. In terms of processing, one or more lysine residues are methylated.

Functionally, forms part of the ribosomal stalk which helps the ribosome interact with GTP-bound translation factors. In Burkholderia cenocepacia (strain HI2424), this protein is Large ribosomal subunit protein uL11.